Here is a 1489-residue protein sequence, read N- to C-terminus: Chromosome partition protein MukB (1489 aa).

Residue 34-41 (GGNGAGKS) participates in ATP binding. 7 coiled-coil regions span residues 326 to 418 (LEAD…QYNQ), 444 to 472 (LETFQAKEQEATEKLLSLEQKMSVAQTAH), 509 to 602 (RHLA…QRAP), 780 to 805 (RAARENRIESLHAEREGLSERFATLS), 835 to 919 (EAEI…GNQL), 977 to 1116 (EMLS…AKAG), and 1209 to 1266 (VEAI…QNVS). The tract at residues 666-783 (PGGSEDSRLN…TVPIFGRAAR (118 aa)) is flexible hinge.

This sequence belongs to the SMC family. MukB subfamily. In terms of assembly, homodimerization via its hinge domain. Binds to DNA via its C-terminal region. Interacts, and probably forms a ternary complex, with MukE and MukF via its C-terminal region. The complex formation is stimulated by calcium or magnesium. Interacts with tubulin-related protein FtsZ.

It localises to the cytoplasm. The protein localises to the nucleoid. Its function is as follows. Plays a central role in chromosome condensation, segregation and cell cycle progression. Functions as a homodimer, which is essential for chromosome partition. Involved in negative DNA supercoiling in vivo, and by this means organize and compact chromosomes. May achieve or facilitate chromosome segregation by condensation DNA from both sides of a centrally located replisome during cell division. The protein is Chromosome partition protein MukB of Citrobacter koseri (strain ATCC BAA-895 / CDC 4225-83 / SGSC4696).